We begin with the raw amino-acid sequence, 62 residues long: E3 SUMO-protein ligase EGR2 (62 aa).

3 C2H2-type zinc fingers span residues Ala-1–His-21, Phe-27–His-49, and Phe-55–Arg-62.

The protein belongs to the EGR C2H2-type zinc-finger protein family. Interacts with HCFC1. Interacts with WWP2. Interacts with UBC9. Interacts with CITED1. Interacts (via phosphorylated form) with SFN. Post-translationally, ubiquitinated by WWP2 leading to proteasomal degradation. Acetylated. May be deacetylated by HDAC6, HDAC10 or SIRT1.

The protein resides in the nucleus. The protein operates within protein modification; protein sumoylation. Sequence-specific DNA-binding transcription factor. Plays a role in hindbrain segmentation by regulating the expression of a subset of homeobox containing genes and in Schwann cell myelination by regulating the expression of genes involved in the formation and maintenance of myelin. Binds to two EGR2-consensus sites EGR2A (5'-CTGTAGGAG-3') and EGR2B (5'-ATGTAGGTG-3') in the HOXB3 enhancer and promotes HOXB3 transcriptional activation. Binds to specific DNA sites located in the promoter region of HOXA4, HOXB2 and ERBB2. Regulates hindbrain segmentation by controlling the expression of Hox genes, such as HOXA4, HOXB3 and HOXB2, and thereby specifying odd and even rhombomeres. Promotes the expression of HOXB3 in the rhombomere r5 in the hindbrain. Regulates myelination in the peripheral nervous system after birth, possibly by regulating the expression of myelin proteins, such as MPZ, and by promoting the differentiation of Schwann cells. Involved in the development of the jaw openener musculature, probably by playing a role in its innervation through trigeminal motor neurons. May play a role in adipogenesis, possibly by regulating the expression of CEBPB. Its function is as follows. E3 SUMO-protein ligase helping SUMO1 conjugation to its coregulators NAB1 and NAB2, whose sumoylation down-regulates EGR2 transcriptional activity. The chain is E3 SUMO-protein ligase EGR2 (EGR2) from Cerdocyon thous (Crab-eating fox).